We begin with the raw amino-acid sequence, 169 residues long: Putative prolyl-tRNA synthetase associated domain-containing protein 1 (169 aa).

The protein belongs to the PRORSD1 family.

The polypeptide is Putative prolyl-tRNA synthetase associated domain-containing protein 1 (PRORSD1P) (Homo sapiens (Human)).